We begin with the raw amino-acid sequence, 361 residues long: Large ribosomal subunit protein mL45 (361 aa).

This sequence belongs to the mitochondrion-specific ribosomal protein mL45 family.

It is found in the mitochondrion. The protein is Large ribosomal subunit protein mL45 (mrpl-45) of Caenorhabditis briggsae.